Consider the following 371-residue polypeptide: tRNA-specific 2-thiouridylase MnmA (371 aa).

ATP-binding positions include glycine 13–serine 20 and methionine 39. Residues asparagine 99 to aspartate 101 are interaction with target base in tRNA. The active-site Nucleophile is the cysteine 104. Cysteines 104 and 200 form a disulfide. Glycine 128 lines the ATP pocket. An interaction with tRNA region spans residues lysine 150 to glutamine 152. The active-site Cysteine persulfide intermediate is the cysteine 200. Residues arginine 308–tyrosine 309 form an interaction with tRNA region.

It belongs to the MnmA/TRMU family.

Its subcellular location is the cytoplasm. It carries out the reaction S-sulfanyl-L-cysteinyl-[protein] + uridine(34) in tRNA + AH2 + ATP = 2-thiouridine(34) in tRNA + L-cysteinyl-[protein] + A + AMP + diphosphate + H(+). Its function is as follows. Catalyzes the 2-thiolation of uridine at the wobble position (U34) of tRNA, leading to the formation of s(2)U34. This Listeria welshimeri serovar 6b (strain ATCC 35897 / DSM 20650 / CCUG 15529 / CIP 8149 / NCTC 11857 / SLCC 5334 / V8) protein is tRNA-specific 2-thiouridylase MnmA.